A 559-amino-acid polypeptide reads, in one-letter code: NXPE family member 3 (559 aa).

The first 30 residues, 1–30, serve as a signal peptide directing secretion; it reads MWINFVKLRLFCCLLAVLMVVVLVVNVTQV. Asn-26, Asn-237, and Asn-346 each carry an N-linked (GlcNAc...) asparagine glycan.

The protein belongs to the NXPE family.

The protein localises to the secreted. The sequence is that of NXPE family member 3 (NXPE3) from Bos taurus (Bovine).